A 334-amino-acid polypeptide reads, in one-letter code: Aspartate carbamoyltransferase catalytic subunit (334 aa).

Carbamoyl phosphate-binding residues include Arg71 and Thr72. Lys99 is a binding site for L-aspartate. 3 residues coordinate carbamoyl phosphate: Arg121, His151, and Gln154. L-aspartate-binding residues include Arg184 and Arg239. 2 residues coordinate carbamoyl phosphate: Gly280 and Pro281.

This sequence belongs to the aspartate/ornithine carbamoyltransferase superfamily. ATCase family. Heterododecamer (2C3:3R2) of six catalytic PyrB chains organized as two trimers (C3), and six regulatory PyrI chains organized as three dimers (R2).

The enzyme catalyses carbamoyl phosphate + L-aspartate = N-carbamoyl-L-aspartate + phosphate + H(+). It functions in the pathway pyrimidine metabolism; UMP biosynthesis via de novo pathway; (S)-dihydroorotate from bicarbonate: step 2/3. Its function is as follows. Catalyzes the condensation of carbamoyl phosphate and aspartate to form carbamoyl aspartate and inorganic phosphate, the committed step in the de novo pyrimidine nucleotide biosynthesis pathway. This chain is Aspartate carbamoyltransferase catalytic subunit, found in Pseudomonas fluorescens (strain SBW25).